A 230-amino-acid chain; its full sequence is uncharacterized protein (230 aa).

The segment at 118–195 (LLDEILPKEP…SKREMERLER (78 aa)) is disordered. Residues 136-146 (QKKKEKRAALK) are compositionally biased toward basic residues. Basic and acidic residues-rich tracts occupy residues 160–170 (ETDLYGDRDSF) and 179–195 (QRSEFRASKREMERLER).

This is an uncharacterized protein from Schizosaccharomyces pombe (strain 972 / ATCC 24843) (Fission yeast).